The following is a 280-amino-acid chain: uncharacterized protein (280 aa).

The signal sequence occupies residues 1-26; it reads MNILIKSAVKNFIVFSTALYTSFSFA.

To E.coli YibQ.

This is an uncharacterized protein from Haemophilus influenzae (strain ATCC 51907 / DSM 11121 / KW20 / Rd).